We begin with the raw amino-acid sequence, 554 residues long: Arginine--tRNA ligase (554 aa).

Positions 132–142 match the 'HIGH' region motif; it reads ANPTGPLHIGH.

This sequence belongs to the class-I aminoacyl-tRNA synthetase family. In terms of assembly, monomer.

The protein localises to the cytoplasm. The catalysed reaction is tRNA(Arg) + L-arginine + ATP = L-arginyl-tRNA(Arg) + AMP + diphosphate. This chain is Arginine--tRNA ligase, found in Pseudarthrobacter chlorophenolicus (strain ATCC 700700 / DSM 12829 / CIP 107037 / JCM 12360 / KCTC 9906 / NCIMB 13794 / A6) (Arthrobacter chlorophenolicus).